Reading from the N-terminus, the 416-residue chain is Adenylosuccinate synthetase (416 aa).

GTP-binding positions include 13–19 and 41–43; these read GDEGKGK and GHT. D14 functions as the Proton acceptor in the catalytic mechanism. Mg(2+) contacts are provided by D14 and G41. Residues 14 to 17, 39 to 42, T126, R140, Q220, T235, and R299 each bind IMP; these read DEGK and NAGH. H42 (proton donor) is an active-site residue. 295 to 301 contacts substrate; sequence TTTGRKR. Residues R301, 327-329, and 405-407 contribute to the GTP site; these read KLD and STS.

The protein belongs to the adenylosuccinate synthetase family. Homodimer. The cofactor is Mg(2+).

The protein resides in the cytoplasm. It catalyses the reaction IMP + L-aspartate + GTP = N(6)-(1,2-dicarboxyethyl)-AMP + GDP + phosphate + 2 H(+). It participates in purine metabolism; AMP biosynthesis via de novo pathway; AMP from IMP: step 1/2. Its function is as follows. Plays an important role in the de novo pathway of purine nucleotide biosynthesis. Catalyzes the first committed step in the biosynthesis of AMP from IMP. In Campylobacter hominis (strain ATCC BAA-381 / DSM 21671 / CCUG 45161 / LMG 19568 / NCTC 13146 / CH001A), this protein is Adenylosuccinate synthetase.